The primary structure comprises 399 residues: Phosphoglycerate kinase (399 aa).

Residues 21–23, arginine 36, 59–62, arginine 120, and arginine 158 each bind substrate; these read DFN and HLGR. Residues lysine 209, glycine 297, glutamate 328, and 355–358 each bind ATP; that span reads GGDS.

Belongs to the phosphoglycerate kinase family. Monomer.

It is found in the cytoplasm. It catalyses the reaction (2R)-3-phosphoglycerate + ATP = (2R)-3-phospho-glyceroyl phosphate + ADP. Its pathway is carbohydrate degradation; glycolysis; pyruvate from D-glyceraldehyde 3-phosphate: step 2/5. The chain is Phosphoglycerate kinase from Streptococcus thermophilus (strain ATCC BAA-250 / LMG 18311).